A 617-amino-acid chain; its full sequence is Elongation factor 4 (617 aa).

The tr-type G domain occupies A17 to V198. Residues D29 to T34 and N145 to D148 contribute to the GTP site.

It belongs to the TRAFAC class translation factor GTPase superfamily. Classic translation factor GTPase family. LepA subfamily.

It localises to the cell membrane. The catalysed reaction is GTP + H2O = GDP + phosphate + H(+). Its function is as follows. Required for accurate and efficient protein synthesis under certain stress conditions. May act as a fidelity factor of the translation reaction, by catalyzing a one-codon backward translocation of tRNAs on improperly translocated ribosomes. Back-translocation proceeds from a post-translocation (POST) complex to a pre-translocation (PRE) complex, thus giving elongation factor G a second chance to translocate the tRNAs correctly. Binds to ribosomes in a GTP-dependent manner. The protein is Elongation factor 4 of Paenarthrobacter aurescens (strain TC1).